The sequence spans 868 residues: Rifampicin phosphotransferase (868 aa).

The segment at 1–313 (MSSFVLDFQE…IYIVQSRPIT (313 aa)) is ATP-binding. ATP-binding residues include K22, R116, G131, T135, Q182, E296, Q308, and R310. Residues 326–756 (NHVYISVGHQ…TSDGEIITGK (431 aa)) form a rifampicin-binding region. The interval 769–867 (GLPVSSGVVE…VHGTEGYIEV (99 aa)) is swivel phosphohistidine. H827 functions as the Tele-phosphohistidine intermediate in the catalytic mechanism.

The protein belongs to the rifampicin phosphotransferase family.

The enzyme catalyses rifampicin + ATP + H2O = 21-phosphorifampicin + AMP + phosphate + 2 H(+). Catalyzes the phosphorylation of rifampicin, also known as rifampin (RIF), leading to its inactivation. Confers high level resistance to a variety of clinically used rifamycin antibiotics. Does not show phosphoenolpyruvate (PEP) synthase activity. This is Rifampicin phosphotransferase from Bacillus cereus (strain ATCC 14579 / DSM 31 / CCUG 7414 / JCM 2152 / NBRC 15305 / NCIMB 9373 / NCTC 2599 / NRRL B-3711).